A 497-amino-acid chain; its full sequence is Glycerol kinase (497 aa).

Residue T12 participates in ADP binding. ATP contacts are provided by T12, T13, and S14. Residue T12 participates in sn-glycerol 3-phosphate binding. R16 lines the ADP pocket. Residues R82, E83, Y134, and D243 each coordinate sn-glycerol 3-phosphate. Glycerol-binding residues include R82, E83, Y134, D243, and Q244. ADP contacts are provided by T265 and G308. 4 residues coordinate ATP: T265, G308, Q312, and G409. ADP contacts are provided by G409 and N413.

The protein belongs to the FGGY kinase family.

The enzyme catalyses glycerol + ATP = sn-glycerol 3-phosphate + ADP + H(+). The protein operates within polyol metabolism; glycerol degradation via glycerol kinase pathway; sn-glycerol 3-phosphate from glycerol: step 1/1. Its activity is regulated as follows. Inhibited by fructose 1,6-bisphosphate (FBP). In terms of biological role, key enzyme in the regulation of glycerol uptake and metabolism. Catalyzes the phosphorylation of glycerol to yield sn-glycerol 3-phosphate. The chain is Glycerol kinase from Oleidesulfovibrio alaskensis (strain ATCC BAA-1058 / DSM 17464 / G20) (Desulfovibrio alaskensis).